The following is a 180-amino-acid chain: Major urinary protein 2 (180 aa).

The signal sequence occupies residues 1–18 (MKMLLLLCLGLTLVCVHA). The cysteines at positions 82 and 175 are disulfide-linked.

Belongs to the calycin superfamily. Lipocalin family. Abundant in the urine of adult male mice but absent from that of females.

It is found in the secreted. Its function is as follows. Binds pheromones that are released from drying urine of males. These pheromones affect the sexual behavior of females. This chain is Major urinary protein 2 (Mup2), found in Mus musculus (Mouse).